Here is a 328-residue protein sequence, read N- to C-terminus: tRNA uridine(34) hydroxylase (328 aa).

One can recognise a Rhodanese domain in the interval 130 to 224; sequence LDEDTVVLDT…YGKDPEVQGE (95 aa). Cys-184 functions as the Cysteine persulfide intermediate in the catalytic mechanism.

This sequence belongs to the TrhO family.

It carries out the reaction uridine(34) in tRNA + AH2 + O2 = 5-hydroxyuridine(34) in tRNA + A + H2O. In terms of biological role, catalyzes oxygen-dependent 5-hydroxyuridine (ho5U) modification at position 34 in tRNAs. This chain is tRNA uridine(34) hydroxylase, found in Streptococcus gordonii (strain Challis / ATCC 35105 / BCRC 15272 / CH1 / DL1 / V288).